A 457-amino-acid polypeptide reads, in one-letter code: Siroheme synthase (457 aa).

Positions 1-204 are precorrin-2 dehydrogenase /sirohydrochlorin ferrochelatase; it reads MDHLPIFCQL…NDQKAITETT (204 aa). Residues 22 to 23 and 43 to 44 contribute to the NAD(+) site; these read DV and LA. A Phosphoserine modification is found at Ser-128. A uroporphyrinogen-III C-methyltransferase region spans residues 216–457; the sequence is GEVVLVGAGP…RDKLNWFSNH (242 aa). Pro-225 contributes to the S-adenosyl-L-methionine binding site. The Proton acceptor role is filled by Asp-248. Catalysis depends on Lys-270, which acts as the Proton donor. Residues 301-303, Ile-306, 331-332, Met-382, and Gly-411 contribute to the S-adenosyl-L-methionine site; these read GGD and TA.

This sequence in the N-terminal section; belongs to the precorrin-2 dehydrogenase / sirohydrochlorin ferrochelatase family. The protein in the C-terminal section; belongs to the precorrin methyltransferase family.

It carries out the reaction uroporphyrinogen III + 2 S-adenosyl-L-methionine = precorrin-2 + 2 S-adenosyl-L-homocysteine + H(+). It catalyses the reaction precorrin-2 + NAD(+) = sirohydrochlorin + NADH + 2 H(+). The catalysed reaction is siroheme + 2 H(+) = sirohydrochlorin + Fe(2+). The protein operates within cofactor biosynthesis; adenosylcobalamin biosynthesis; precorrin-2 from uroporphyrinogen III: step 1/1. Its pathway is cofactor biosynthesis; adenosylcobalamin biosynthesis; sirohydrochlorin from precorrin-2: step 1/1. It functions in the pathway porphyrin-containing compound metabolism; siroheme biosynthesis; precorrin-2 from uroporphyrinogen III: step 1/1. It participates in porphyrin-containing compound metabolism; siroheme biosynthesis; siroheme from sirohydrochlorin: step 1/1. The protein operates within porphyrin-containing compound metabolism; siroheme biosynthesis; sirohydrochlorin from precorrin-2: step 1/1. In terms of biological role, multifunctional enzyme that catalyzes the SAM-dependent methylations of uroporphyrinogen III at position C-2 and C-7 to form precorrin-2 via precorrin-1. Then it catalyzes the NAD-dependent ring dehydrogenation of precorrin-2 to yield sirohydrochlorin. Finally, it catalyzes the ferrochelation of sirohydrochlorin to yield siroheme. This chain is Siroheme synthase, found in Shigella boydii serotype 18 (strain CDC 3083-94 / BS512).